Here is a 550-residue protein sequence, read N- to C-terminus: Hydroxylamine reductase (550 aa).

[2Fe-2S] cluster is bound by residues C3, C6, C18, and C25. Hybrid [4Fe-2O-2S] cluster is bound by residues H249, E273, C317, C405, C433, C458, E492, and K494. C405 carries the post-translational modification Cysteine persulfide.

This sequence belongs to the HCP family. Requires [2Fe-2S] cluster as cofactor. Hybrid [4Fe-2O-2S] cluster is required as a cofactor.

The protein resides in the cytoplasm. It carries out the reaction A + NH4(+) + H2O = hydroxylamine + AH2 + H(+). Its function is as follows. Catalyzes the reduction of hydroxylamine to form NH(3) and H(2)O. In Escherichia coli O17:K52:H18 (strain UMN026 / ExPEC), this protein is Hydroxylamine reductase.